The primary structure comprises 341 residues: Serine/threonine-protein kinase pdik1l (341 aa).

One can recognise a Protein kinase domain in the interval 8–332 (YELIQEVGRG…FELELRLVRI (325 aa)). Position 14–22 (14–22 (VGRGSYGVV)) interacts with ATP. The active-site Proton acceptor is aspartate 164.

The protein belongs to the protein kinase superfamily. Ser/Thr protein kinase family.

The protein localises to the nucleus. The enzyme catalyses L-seryl-[protein] + ATP = O-phospho-L-seryl-[protein] + ADP + H(+). It carries out the reaction L-threonyl-[protein] + ATP = O-phospho-L-threonyl-[protein] + ADP + H(+). The chain is Serine/threonine-protein kinase pdik1l (pdik1l) from Danio rerio (Zebrafish).